The chain runs to 185 residues: Transcription factor bHLH109 (185 aa).

Residues 67 to 117 (RSMEYRMMMEKKRRKEIKDKVDILQGLMPNHCTKPDLASKLENIIEYIKSL) form the bHLH domain.

Belongs to the bHLH protein family. Homodimer.

Its subcellular location is the nucleus. Transcription factor involved in somatic embryogenesis. Acts as a positive regulator of somatic embryo formation. Acts as a positive regulator of ECP63 by targeting its promoter and inducing its expression. This is Transcription factor bHLH109 (BHLH109) from Arabidopsis thaliana (Mouse-ear cress).